The sequence spans 1259 residues: Protein flightless-1 homolog (1259 aa).

LRR repeat units follow at residues 7 to 32 (LPFIRGVDLSGNDFKGGNFPEHVKSM), 33 to 55 (TSLRWLKLNRTGLCYLPEELASL), 56 to 78 (QKLEHLSVSHNSLTTLHGELSSL), 80 to 103 (NLRAVVARANNLKNSGVPDDIFQL), 104 to 126 (DDLSVLDLSHNQLTEIPRDLENS), 128 to 149 (NMLVLNLSHNSIDNIPNQLFIN), 150 to 173 (LTDLLYLDLSDNNLDSLPPQMRRL), 176 to 201 (LQTLILNNNPLMHAQLRQLPVMVSLQ), 222 to 245 (LSNLTDVDLSCNDLTRVPECLYSL), 247 to 268 (NLKRLNLSSNQISELSLCIDQW), 269 to 291 (TKLETLNLSRNQLTSLPSAICKL), 293 to 316 (KLKKLYVNSNKIDFDGLPSGVGKL), 317 to 339 (SNLVEFMAANNNLELVPEGLCRC), 340 to 363 (GKLKKLVLNKNRLVTLPEAIHFLT), and 365 to 385 (LEVLDVRENPNLVMPPKPVDR). 4 Gelsolin-like repeats span residues 509–589 (IPIQ…SEEF), 628–702 (NIRL…PEFW), 757–830 (DVVP…CQVF), and 1170–1225 (EKCS…RSKD).

Expressed in ventricular cardiomyocytes, where it particularly localizes to intercalated disks and costamere-like structures (at protein level).

The protein localises to the nucleus. It localises to the cytoplasm. The protein resides in the cytoskeleton. Its subcellular location is the microtubule organizing center. It is found in the centrosome. The protein localises to the cell junction. It localises to the focal adhesion. Functionally, is a regulator of actin polymerization, required for proper myofibril organization and the assembly of cardiomyocyte cell adhesion complexes. Is a regulator of the length of sarcomeric thin filaments. Regulates cytoskeletal rearrangements involved in cytokinesis and cell migration, by inhibiting Rac1-dependent paxillin phosphorylation. May play a role as coactivator in transcriptional activation by hormone-activated nuclear receptors (NR) and acts in cooperation with NCOA2 and CARM1. Involved in estrogen hormone signaling. This Danio rerio (Zebrafish) protein is Protein flightless-1 homolog.